The sequence spans 443 residues: Ribosomal protein uS12 methylthiotransferase RimO (443 aa).

In terms of domain architecture, MTTase N-terminal spans 5–116 (PTIAINHLGC…IVDIIRRTEQ (112 aa)). Positions 14, 50, 79, 154, 158, and 161 each coordinate [4Fe-4S] cluster. One can recognise a Radical SAM core domain in the interval 140 to 369 (TTNEAIAYLR…MALQQPISAQ (230 aa)). In terms of domain architecture, TRAM spans 372 to 438 (AACLGQTLDV…DYDLYGMTAE (67 aa)).

It belongs to the methylthiotransferase family. RimO subfamily. [4Fe-4S] cluster is required as a cofactor.

It localises to the cytoplasm. The enzyme catalyses L-aspartate(89)-[ribosomal protein uS12]-hydrogen + (sulfur carrier)-SH + AH2 + 2 S-adenosyl-L-methionine = 3-methylsulfanyl-L-aspartate(89)-[ribosomal protein uS12]-hydrogen + (sulfur carrier)-H + 5'-deoxyadenosine + L-methionine + A + S-adenosyl-L-homocysteine + 2 H(+). Its function is as follows. Catalyzes the methylthiolation of an aspartic acid residue of ribosomal protein uS12. The chain is Ribosomal protein uS12 methylthiotransferase RimO from Synechocystis sp. (strain ATCC 27184 / PCC 6803 / Kazusa).